The primary structure comprises 86 residues: HssA/B-like protein 60 (86 aa).

The disordered stretch occupies residues 11 to 33 (GNIKSSSKSNIASSSSSSSSQSL).

This sequence belongs to the hssA/B family.

This Dictyostelium discoideum (Social amoeba) protein is HssA/B-like protein 60 (hssl60).